A 298-amino-acid polypeptide reads, in one-letter code: Urease accessory protein UreD 3 (298 aa).

The segment at 1 to 30 (MADEAGTRSAGGRPIPAAEPLRPALSRQRS) is disordered.

Belongs to the UreD family. UreD, UreF and UreG form a complex that acts as a GTP-hydrolysis-dependent molecular chaperone, activating the urease apoprotein by helping to assemble the nickel containing metallocenter of UreC. The UreE protein probably delivers the nickel.

The protein localises to the cytoplasm. Functionally, required for maturation of urease via the functional incorporation of the urease nickel metallocenter. The sequence is that of Urease accessory protein UreD 3 from Methylorubrum extorquens (strain PA1) (Methylobacterium extorquens).